Reading from the N-terminus, the 372-residue chain is PqqA peptide cyclase (372 aa).

The Radical SAM core domain occupies 4-220; the sequence is APPPLSVLLE…ETARRQLGDR (217 aa). [4Fe-4S] cluster-binding residues include Cys-18, Cys-22, and Cys-25.

Belongs to the radical SAM superfamily. PqqE family. As to quaternary structure, interacts with PqqD. The interaction is necessary for activity of PqqE. It depends on [4Fe-4S] cluster as a cofactor.

It carries out the reaction [PQQ precursor protein] + S-adenosyl-L-methionine = E-Y cross-linked-[PQQ precursor protein] + 5'-deoxyadenosine + L-methionine + H(+). Its pathway is cofactor biosynthesis; pyrroloquinoline quinone biosynthesis. Its function is as follows. Catalyzes the cross-linking of a glutamate residue and a tyrosine residue in the PqqA protein as part of the biosynthesis of pyrroloquinoline quinone (PQQ). The polypeptide is PqqA peptide cyclase (Xanthomonas axonopodis pv. citri (strain 306)).